A 423-amino-acid polypeptide reads, in one-letter code: Endoplasmic reticulum junction formation protein lunapark (423 aa).

At 1–45 the chain is on the cytoplasmic side; sequence MGALLAKWRAKPSTVEVLEKMEKDIQSLEEFRDKNQKLRKIWVAR. Residues 16–40 are a coiled coil; sequence EVLEKMEKDIQSLEEFRDKNQKLRK. A helical membrane pass occupies residues 46 to 66; sequence LFFYSTILYILTSLTVYLWYL. Residues 67–77 are Lumenal-facing; that stretch reads PDGMTARLLTM. Residues 78-98 form a helical membrane-spanning segment; it reads LLFLSFPVLIWFVRTLLILWF. Residues 99-423 lie on the Cytoplasmic side of the membrane; it reads SRRTERNNDA…ETEESFMETE (325 aa). Positions 101–128 form a coiled coil; that stretch reads RTERNNDALELLKTEKKKILEEVMEKET. The disordered stretch occupies residues 147 to 169; that stretch reads KELELPVPGPPITPRPGQDLRQR. Thr-159 carries the post-translational modification Phosphothreonine. Phosphoserine occurs at positions 177, 179, and 188. Thr-198 carries the phosphothreonine modification. Residues 200 to 247 form a disordered region; sequence SLQRDTSAPGGPPERSVQPTPQSNILQRRPGSPATTVSGMAIHPPGPP. Residues Ser-206 and Ser-215 each carry the phosphoserine modification. Residues 216-225 are compositionally biased toward polar residues; the sequence is VQPTPQSNIL. Residue Thr-219 is modified to Phosphothreonine. 2 positions are modified to phosphoserine: Ser-222 and Ser-231. Residues 280–305 form a C4-type; plays a role in ER morphology zinc finger; it reads CQQCFSHNGMALKEEFEYVAFRCAYC. The interval 318 to 423 is disordered; that stretch reads APRLQEINFD…ETEESFMETE (106 aa). A compositionally biased stretch (polar residues) spans 334–343; it reads DSQGSVSSVQ. 2 stretches are compositionally biased toward acidic residues: residues 370–391 and 414–423; these read QAIE…DDSE and ETEESFMETE.

The protein belongs to the lunapark family. In terms of assembly, homodimer; homodimerization requires the C4-type zinc finger motif and decreases during mitosis in a phosphorylation-dependent manner. Phosphorylated. Phosphorylation at Thr-159 occurs during interphase. Phosphorylation at Ser-177, Ser-179, Ser-188, Thr-198, Ser-206, Ser-215, Thr-219, Ser-222 and Ser-231 occurs during mitosis; these phosphorylations reduce both its homodimerization and the ER three-way tubular junction formation.

The protein resides in the endoplasmic reticulum membrane. Functionally, endoplasmic reticulum (ER)-shaping membrane protein that plays a role in determining ER morphology. Involved in the stabilization of nascent three-way ER tubular junctions within the ER network. May also play a role as a curvature-stabilizing protein within three-way ER tubular junction network. The sequence is that of Endoplasmic reticulum junction formation protein lunapark (lnpk) from Xenopus tropicalis (Western clawed frog).